Reading from the N-terminus, the 308-residue chain is GTP cyclohydrolase FolE2 (308 aa).

Belongs to the GTP cyclohydrolase IV family.

The enzyme catalyses GTP + H2O = 7,8-dihydroneopterin 3'-triphosphate + formate + H(+). The protein operates within cofactor biosynthesis; 7,8-dihydroneopterin triphosphate biosynthesis; 7,8-dihydroneopterin triphosphate from GTP: step 1/1. Converts GTP to 7,8-dihydroneopterin triphosphate. This chain is GTP cyclohydrolase FolE2, found in Idiomarina loihiensis (strain ATCC BAA-735 / DSM 15497 / L2-TR).